The chain runs to 445 residues: Na(+)-translocating NADH-quinone reductase subunit A (445 aa).

Belongs to the NqrA family. Composed of six subunits; NqrA, NqrB, NqrC, NqrD, NqrE and NqrF.

It carries out the reaction a ubiquinone + n Na(+)(in) + NADH + H(+) = a ubiquinol + n Na(+)(out) + NAD(+). NQR complex catalyzes the reduction of ubiquinone-1 to ubiquinol by two successive reactions, coupled with the transport of Na(+) ions from the cytoplasm to the periplasm. NqrA to NqrE are probably involved in the second step, the conversion of ubisemiquinone to ubiquinol. The sequence is that of Na(+)-translocating NADH-quinone reductase subunit A from Teredinibacter turnerae (strain ATCC 39867 / T7901).